Reading from the N-terminus, the 389-residue chain is S-adenosylmethionine synthase (389 aa).

Histidine 17 lines the ATP pocket. Aspartate 19 lines the Mg(2+) pocket. Position 45 (glutamate 45) interacts with K(+). L-methionine is bound by residues glutamate 58 and glutamine 101. Residues 101–111 are flexible loop; sequence QSPDIGQGVDV. ATP contacts are provided by residues 160 to 162, 226 to 227, aspartate 235, 241 to 242, alanine 258, and lysine 262; these read DGK, RF, and RK. Position 235 (aspartate 235) interacts with L-methionine. Residue lysine 266 participates in L-methionine binding.

The protein belongs to the AdoMet synthase family. As to quaternary structure, homotetramer; dimer of dimers. It depends on Mg(2+) as a cofactor. K(+) serves as cofactor.

Its subcellular location is the cytoplasm. The enzyme catalyses L-methionine + ATP + H2O = S-adenosyl-L-methionine + phosphate + diphosphate. It participates in amino-acid biosynthesis; S-adenosyl-L-methionine biosynthesis; S-adenosyl-L-methionine from L-methionine: step 1/1. Functionally, catalyzes the formation of S-adenosylmethionine (AdoMet) from methionine and ATP. The overall synthetic reaction is composed of two sequential steps, AdoMet formation and the subsequent tripolyphosphate hydrolysis which occurs prior to release of AdoMet from the enzyme. The polypeptide is S-adenosylmethionine synthase (Anaeromyxobacter sp. (strain Fw109-5)).